The chain runs to 330 residues: ADP-L-glycero-D-manno-heptose-6-epimerase (330 aa).

NADP(+) contacts are provided by residues Phe-11 to Ile-12, Asp-32 to Asp-33, Gln-39, Gln-54, Gln-75 to Ala-79, and Asn-92. Tyr-139 serves as the catalytic Proton acceptor. Lys-143 provides a ligand contact to NADP(+). Substrate is bound at residue Asn-168. NADP(+)-binding residues include Val-169 and Lys-177. Lys-177 acts as the Proton acceptor in catalysis. Substrate-binding positions include Arg-179, His-186, Phe-200–His-203, Arg-213, and Tyr-292.

Belongs to the NAD(P)-dependent epimerase/dehydratase family. HldD subfamily. In terms of assembly, homopentamer. It depends on NADP(+) as a cofactor.

It catalyses the reaction ADP-D-glycero-beta-D-manno-heptose = ADP-L-glycero-beta-D-manno-heptose. The protein operates within nucleotide-sugar biosynthesis; ADP-L-glycero-beta-D-manno-heptose biosynthesis; ADP-L-glycero-beta-D-manno-heptose from D-glycero-beta-D-manno-heptose 7-phosphate: step 4/4. It functions in the pathway bacterial outer membrane biogenesis; LPS core biosynthesis. Functionally, catalyzes the interconversion between ADP-D-glycero-beta-D-manno-heptose and ADP-L-glycero-beta-D-manno-heptose via an epimerization at carbon 6 of the heptose. The sequence is that of ADP-L-glycero-D-manno-heptose-6-epimerase from Pseudomonas aeruginosa (strain ATCC 15692 / DSM 22644 / CIP 104116 / JCM 14847 / LMG 12228 / 1C / PRS 101 / PAO1).